The following is a 194-amino-acid chain: dITP/XTP pyrophosphatase (194 aa).

Residue 9 to 14 coordinates substrate; that stretch reads THNPGK. Residues Asp40 and Asp69 each contribute to the Mg(2+) site. The active-site Proton acceptor is Asp69. Substrate contacts are provided by residues Ser70, 152-155, Lys175, and 180-181; these read FGYD and HR.

The protein belongs to the HAM1 NTPase family. In terms of assembly, homodimer. It depends on Mg(2+) as a cofactor.

The catalysed reaction is XTP + H2O = XMP + diphosphate + H(+). It carries out the reaction dITP + H2O = dIMP + diphosphate + H(+). The enzyme catalyses ITP + H2O = IMP + diphosphate + H(+). Pyrophosphatase that catalyzes the hydrolysis of nucleoside triphosphates to their monophosphate derivatives, with a high preference for the non-canonical purine nucleotides XTP (xanthosine triphosphate), dITP (deoxyinosine triphosphate) and ITP. Seems to function as a house-cleaning enzyme that removes non-canonical purine nucleotides from the nucleotide pool, thus preventing their incorporation into DNA/RNA and avoiding chromosomal lesions. The chain is dITP/XTP pyrophosphatase from Caulobacter vibrioides (strain ATCC 19089 / CIP 103742 / CB 15) (Caulobacter crescentus).